A 446-amino-acid polypeptide reads, in one-letter code: Phosphoglucosamine mutase (446 aa).

Catalysis depends on serine 100, which acts as the Phosphoserine intermediate. Serine 100, aspartate 241, aspartate 243, and aspartate 245 together coordinate Mg(2+). Serine 100 bears the Phosphoserine mark.

The protein belongs to the phosphohexose mutase family. Requires Mg(2+) as cofactor. Activated by phosphorylation.

It carries out the reaction alpha-D-glucosamine 1-phosphate = D-glucosamine 6-phosphate. In terms of biological role, catalyzes the conversion of glucosamine-6-phosphate to glucosamine-1-phosphate. This chain is Phosphoglucosamine mutase, found in Methylobacterium sp. (strain 4-46).